We begin with the raw amino-acid sequence, 901 residues long: MEANQCPLVVEPSYPDLVINVGEVTLGEENRKKLQKIQRDQEKERVMRAACALLNSGGGVIRMAKKVEHPVEMGLDLEQSLRELIQSSDLQAFFETKQQGRCFYIFVKSWSSGPFPEDRSVKPRLCSLSSSLYRRSETSVRSMDSREAFCFLKTKRKPKILEEGPFHKIHKGVYQELPNSDPADPNSDPADLIFQKDYLEYGEILPFPESQLVEFKQFSTKHFQEYVKRTIPEYVPAFANTGGGYLFIGVDDKSREVLGCAKENVDPDSLRRKIEQAIYKLPCVHFCQPQRPITFTLKIVNVLKRGELYGYACMIRVNPFCCAVFSEAPNSWIVEDKYVCSLTTEKWVGMMTDTDPDLLQLSEDFECQLSLSSGPPLSRPVYSKKGLEHKKELQQLLFSVPPGYLRYTPESLWRDLISEHRGLEELINKQMQPFFRGILIFSRSWAVDLNLQEKPGVICDALLIAQNSTPILYTILREQDAEGQDYCTRTAFTLKQKLVNMGGYTGKVCVRAKVLCLSPESSAEALEAAVSPMDYPASYSLAGTQHMEALLQSLVIVLLGFRSLLSDQLGCEVLNLLTAQQYEIFSRSLRKNRELFVHGLPGSGKTIMAMKIMEKIRNVFHCEAHRILYVCENQPLRNFISDRNICRAETRKTFLRENFEHIQHIVIDEAQNFRTEDGDWYGKAKSITRRAKGGPGILWIFLDYFQTSHLDCSGLPPLSDQYPREELTRIVRNADPIAKYLQKEMQVIRSNPSFNIPTGCLEVFPEAEWSQGVQGTLRIKKYLTVEQIMTCVADTCRRFFDRGYSPKDVAVLVSTAKEVEHYKYELLKAMRKKRVVQLSDACDMLGDHIVLDSVRRFSGLERSIVFGIHPRTADPAILPNVLICLASRAKQHLYIFPWGGH.

Mg(2+) is bound by residues glutamate 209 and glutamate 214. Lysine 216 is an active-site residue. Zn(2+) contacts are provided by histidine 285, cysteine 287, cysteine 321, and cysteine 322. Residue 599 to 606 (GLPGSGKT) coordinates ATP.

The protein belongs to the Schlafen family. Subgroup III subfamily. Homodimer. Interacts with MCM3. Interacts with DHX9. Interacts with RPA1. Requires Mg(2+) as cofactor. Exhibits a wider expression range in ovarian and colon adenocarcinoma than in their corresponding healthy tissues.

It is found in the nucleus. It localises to the chromosome. Functionally, inhibitor of DNA replication that promotes cell death in response to DNA damage. Acts as a guardian of the genome by killing cells with defective replication. Persistently blocks stressed replication forks by opening chromatin across replication initiation sites at stressed replication forks, possibly leading to unwind DNA ahead of the MCM helicase and block fork progression, ultimately leading to cell death. Upon DNA damage, inhibits translation of ATR or ATM based on distinct codon usage without disrupting early DNA damage response signaling. Antiviral restriction factor with manganese-dependent type II tRNA endoribonuclease. A single tRNA molecule is bound and cleaved by the SLFN11 dimer. Specifically abrogates the production of retroviruses such as human immunodeficiency virus 1 (HIV-1) by acting as a specific inhibitor of the synthesis of retroviruses encoded proteins in a codon-usage-dependent manner. Impairs the replication of human cytomegalovirus (HCMV) and some Flaviviruses. Exploits the unique viral codon bias towards A/T nucleotides. Also acts as an interferon (IFN)-induced antiviral protein which acts as an inhibitor of retrovirus protein synthesis. This is Schlafen family member 11 from Homo sapiens (Human).